The primary structure comprises 251 residues: Ditrans,polycis-undecaprenyl-diphosphate synthase ((2E,6E)-farnesyl-diphosphate specific) (251 aa).

D26 is a catalytic residue. D26 serves as a coordination point for Mg(2+). Residues 27-30, W31, R39, H43, and 71-73 contribute to the substrate site; these read GNGR and SSE. N74 functions as the Proton acceptor in the catalytic mechanism. Residues W75, R77, R194, and 200–202 contribute to the substrate site; that span reads RIS. E213 contacts Mg(2+).

This sequence belongs to the UPP synthase family. In terms of assembly, homodimer. The cofactor is Mg(2+).

The catalysed reaction is 8 isopentenyl diphosphate + (2E,6E)-farnesyl diphosphate = di-trans,octa-cis-undecaprenyl diphosphate + 8 diphosphate. Its function is as follows. Catalyzes the sequential condensation of isopentenyl diphosphate (IPP) with (2E,6E)-farnesyl diphosphate (E,E-FPP) to yield (2Z,6Z,10Z,14Z,18Z,22Z,26Z,30Z,34E,38E)-undecaprenyl diphosphate (di-trans,octa-cis-UPP). UPP is the precursor of glycosyl carrier lipid in the biosynthesis of bacterial cell wall polysaccharide components such as peptidoglycan and lipopolysaccharide. The sequence is that of Ditrans,polycis-undecaprenyl-diphosphate synthase ((2E,6E)-farnesyl-diphosphate specific) from Buchnera aphidicola subsp. Acyrthosiphon pisum (strain APS) (Acyrthosiphon pisum symbiotic bacterium).